Reading from the N-terminus, the 101-residue chain is uncharacterized protein (101 aa).

This is an uncharacterized protein from Mycobacterium tuberculosis (strain CDC 1551 / Oshkosh).